We begin with the raw amino-acid sequence, 563 residues long: Calmodulin-binding protein 60 G (563 aa).

The segment at 1-76 (MKIRNSPSFH…SSCVSMERSR (76 aa)) is calmodulin-binding. The DNA-binding stretch occupies residues 147–263 (ESWTVEGFNR…VSATRLAERK (117 aa)).

Belongs to the plant ACBP60 protein family. As to quaternary structure, interacts with calmodulin (CaM) in the presence of calcium ions; this interaction is required for defense responses. In terms of assembly, (Microbial infection) Interacts with V.dahliae SCP41; the interaction is direct and inhibits CBP60G. In terms of tissue distribution, expressed in seedlings, roots, leaves, inflorescences and flowers, and, to a lower extent, in siliques. Particularly present in guard cells.

The protein resides in the nucleus. Its function is as follows. Transcription activator that binds DNA in a sequence-specific manner, 5'-GAAATTTTGG-3', to promote the expression of target genes. Recruited to the promoter of ICS1 and other defense-related genes (e.g. PR1, PR2 and EDS5) in response to both biotic (e.g. Pseudomonas syringae pv. maculicola ES4326, P.syringae pv. tomato DC3000, and microbe-associated molecular patterns (MAMPs) such as flg22) and abiotic stresses (e.g. UV-B, drought and abscisic acid), thus triggering rapid defense responses by stimulating salicylic acid (SA) biosynthesis. Involved in basal and systemic acquired resistance to P.syringae and Hyaloperonospora arabidopsidis. Mediates resistance to drought and sensitivity to abscisic acid (ABA), especially for ABA-mediated signaling process that regulates early seedling growth. In Arabidopsis thaliana (Mouse-ear cress), this protein is Calmodulin-binding protein 60 G.